A 101-amino-acid chain; its full sequence is Cilia- and flagella-associated protein 141 (101 aa).

Microtubule inner protein component of sperm flagellar doublet microtubules.

The protein resides in the cytoplasm. It localises to the cytoskeleton. It is found in the cilium axoneme. Its subcellular location is the flagellum axoneme. In terms of biological role, microtubule inner protein (MIP) part of the dynein-decorated doublet microtubules (DMTs) in cilia axoneme, which is required for motile cilia beating. This chain is Cilia- and flagella-associated protein 141, found in Mus musculus (Mouse).